The following is a 744-amino-acid chain: Eukaryotic translation initiation factor 3 subunit B (744 aa).

Residues Met-1–Glu-20 form a disordered region. Acidic residues predominate over residues Pro-11–Glu-20. In terms of domain architecture, RRM spans Thr-40–Asp-126. WD repeat units follow at residues Asp-193–Arg-232, Ala-234–Ser-290, Pro-307–Lys-348, and Ala-577–Glu-622. The segment covering Glu-699–Lys-714 has biased composition (basic and acidic residues). Residues Glu-699–Glu-722 form a disordered region.

Belongs to the eIF-3 subunit B family. In terms of assembly, component of the eukaryotic translation initiation factor 3 (eIF-3) complex.

The protein resides in the cytoplasm. In terms of biological role, RNA-binding component of the eukaryotic translation initiation factor 3 (eIF-3) complex, which is involved in protein synthesis of a specialized repertoire of mRNAs and, together with other initiation factors, stimulates binding of mRNA and methionyl-tRNAi to the 40S ribosome. The eIF-3 complex specifically targets and initiates translation of a subset of mRNAs involved in cell proliferation. This chain is Eukaryotic translation initiation factor 3 subunit B (prt1), found in Sclerotinia sclerotiorum (strain ATCC 18683 / 1980 / Ss-1) (White mold).